The chain runs to 120 residues: Putative ankyrin repeat protein RBE_1215 (120 aa).

ANK repeat units lie at residues 22 to 52 and 59 to 88; these read DGGN…LTNI and FGDT…ITSV.

In Rickettsia bellii (strain RML369-C), this protein is Putative ankyrin repeat protein RBE_1215.